The sequence spans 392 residues: Zinc finger protein CONSTANS-LIKE 7 (392 aa).

The Zn(2+) site is built by C22, C25, C46, and H51. The B box-type; atypical zinc finger occupies 22-65; that stretch reads CDACMKRSRASWYCPADDAFLCQSCDASIHSANHLAKRHERVRL. A coiled-coil region spans residues 226 to 254; it reads KEENKVGFEINCKDLKRVKDEDEEEEEAK. Disordered regions lie at residues 246-271 and 326-346; these read EDEE…SNDK and SDGS…GERE. Basic and acidic residues predominate over residues 259–271; it reads GSKDSDREASNDK. The 43-residue stretch at 345–387 folds into the CCT domain; sequence REARVLRYKEKRRTRLFSKKIRYEVRKLNAEQRPRIKGRFVKR.

The protein belongs to the CONSTANS family.

The protein resides in the nucleus. The sequence is that of Zinc finger protein CONSTANS-LIKE 7 (COL7) from Arabidopsis thaliana (Mouse-ear cress).